A 99-amino-acid polypeptide reads, in one-letter code: Integration host factor subunit alpha (99 aa).

A disordered region spans residues 49–75; sequence FGNFDLRDKNQRPGRNPKTGEDIPITA.

It belongs to the bacterial histone-like protein family. In terms of assembly, heterodimer of an alpha and a beta chain.

This protein is one of the two subunits of integration host factor, a specific DNA-binding protein that functions in genetic recombination as well as in transcriptional and translational control. The polypeptide is Integration host factor subunit alpha (Salmonella agona (strain SL483)).